Reading from the N-terminus, the 333-residue chain is Protein-methionine-sulfoxide reductase catalytic subunit MsrP (333 aa).

Positions 1 to 43 (MHKHRKPTEADVTPESLFYQRRRVLKALGISAAALSLPLSAQA) form a signal peptide, tat-type signal. Mo-molybdopterin-binding positions include asparagine 87, 90-91 (YE), cysteine 145, threonine 180, asparagine 232, arginine 237, and 248-250 (NIK).

It belongs to the MsrP family. As to quaternary structure, heterodimer of a catalytic subunit (MsrP) and a heme-binding subunit (MsrQ). Requires Mo-molybdopterin as cofactor. Predicted to be exported by the Tat system. The position of the signal peptide cleavage has not been experimentally proven.

It localises to the periplasm. The catalysed reaction is L-methionyl-[protein] + a quinone + H2O = L-methionyl-(S)-S-oxide-[protein] + a quinol. It carries out the reaction L-methionyl-[protein] + a quinone + H2O = L-methionyl-(R)-S-oxide-[protein] + a quinol. Its function is as follows. Part of the MsrPQ system that repairs oxidized periplasmic proteins containing methionine sulfoxide residues (Met-O), using respiratory chain electrons. Thus protects these proteins from oxidative-stress damage caused by reactive species of oxygen and chlorine generated by the host defense mechanisms. MsrPQ is essential for the maintenance of envelope integrity under bleach stress, rescuing a wide series of structurally unrelated periplasmic proteins from methionine oxidation. The catalytic subunit MsrP is non-stereospecific, being able to reduce both (R-) and (S-) diastereoisomers of methionine sulfoxide. In Pectobacterium atrosepticum (strain SCRI 1043 / ATCC BAA-672) (Erwinia carotovora subsp. atroseptica), this protein is Protein-methionine-sulfoxide reductase catalytic subunit MsrP.